Consider the following 315-residue polypeptide: Biotin synthase (315 aa).

In terms of domain architecture, Radical SAM core spans Asn-39–Arg-266. [4Fe-4S] cluster-binding residues include Cys-54, Cys-58, and Cys-61. [2Fe-2S] cluster contacts are provided by Cys-98, Cys-129, Cys-189, and Arg-261.

This sequence belongs to the radical SAM superfamily. Biotin synthase family. Homodimer. It depends on [4Fe-4S] cluster as a cofactor. [2Fe-2S] cluster is required as a cofactor.

It catalyses the reaction (4R,5S)-dethiobiotin + (sulfur carrier)-SH + 2 reduced [2Fe-2S]-[ferredoxin] + 2 S-adenosyl-L-methionine = (sulfur carrier)-H + biotin + 2 5'-deoxyadenosine + 2 L-methionine + 2 oxidized [2Fe-2S]-[ferredoxin]. Its pathway is cofactor biosynthesis; biotin biosynthesis; biotin from 7,8-diaminononanoate: step 2/2. Catalyzes the conversion of dethiobiotin (DTB) to biotin by the insertion of a sulfur atom into dethiobiotin via a radical-based mechanism. This is Biotin synthase from Legionella pneumophila (strain Paris).